The sequence spans 388 residues: Succinate--CoA ligase [ADP-forming] subunit beta (388 aa).

One can recognise an ATP-grasp domain in the interval 9-244 (KQIFAEYQLP…PSQEDPREAL (236 aa)). ATP is bound by residues K46, 53–55 (GRG), E99, S102, and E107. Residues N199 and D213 each contribute to the Mg(2+) site. Residues N264 and 321-323 (GIV) each bind substrate.

The protein belongs to the succinate/malate CoA ligase beta subunit family. As to quaternary structure, heterotetramer of two alpha and two beta subunits. It depends on Mg(2+) as a cofactor.

It carries out the reaction succinate + ATP + CoA = succinyl-CoA + ADP + phosphate. It catalyses the reaction GTP + succinate + CoA = succinyl-CoA + GDP + phosphate. It functions in the pathway carbohydrate metabolism; tricarboxylic acid cycle; succinate from succinyl-CoA (ligase route): step 1/1. Succinyl-CoA synthetase functions in the citric acid cycle (TCA), coupling the hydrolysis of succinyl-CoA to the synthesis of either ATP or GTP and thus represents the only step of substrate-level phosphorylation in the TCA. The beta subunit provides nucleotide specificity of the enzyme and binds the substrate succinate, while the binding sites for coenzyme A and phosphate are found in the alpha subunit. This is Succinate--CoA ligase [ADP-forming] subunit beta from Pasteurella multocida (strain Pm70).